We begin with the raw amino-acid sequence, 513 residues long: Fumarate reductase (513 aa).

Residue 41–55 (AIVIGGGLAGLSATN) participates in FAD binding. Ser100 is modified (phosphoserine). Active-site residues include His288 and Arg311.

Belongs to the FAD-dependent oxidoreductase 2 family. FRD/SDH subfamily. Requires FAD as cofactor.

It is found in the cytoplasm. It localises to the mitochondrion. Its subcellular location is the nucleus. It carries out the reaction succinate + NAD(+) = fumarate + NADH + H(+). Its function is as follows. Irreversibly catalyzes the reduction of fumarate to succinate. The protein is Fumarate reductase (osm1) of Schizosaccharomyces pombe (strain 972 / ATCC 24843) (Fission yeast).